Reading from the N-terminus, the 589-residue chain is Protein FAM161B (589 aa).

Disordered regions lie at residues 1-166, 265-297, and 386-444; these read MTVG…VCSW, KKEQ…RKIP, and AERR…GLAS. Positions 92 to 106 are enriched in acidic residues; the sequence is PDSDLNDAEDEEDLE. The segment covering 151–166 has biased composition (polar residues); the sequence is TSDSGPPSQHRSVCSW. The segment covering 265–275 has biased composition (basic and acidic residues); the sequence is KKEQQKEDAPQ. Residues 287-297 show a composition bias toward basic residues; sequence SPKKATSRKIP. Positions 386–396 are enriched in basic and acidic residues; it reads AERRETRETTR. The stretch at 510-577 forms a coiled coil; the sequence is EEVFKAKLKE…ALKQAGLEEE (68 aa).

It belongs to the FAM161 family. In terms of assembly, interacts with FAM161A.

In Mus musculus (Mouse), this protein is Protein FAM161B (Fam161b).